Consider the following 417-residue polypeptide: Glutamyl-tRNA reductase (417 aa).

Substrate-binding positions include Thr49–Arg52, Ser105, Glu110–Gln112, and Gln116. Cys50 functions as the Nucleophile in the catalytic mechanism. Gly185 to Ile190 contacts NADP(+).

This sequence belongs to the glutamyl-tRNA reductase family. As to quaternary structure, homodimer.

The enzyme catalyses (S)-4-amino-5-oxopentanoate + tRNA(Glu) + NADP(+) = L-glutamyl-tRNA(Glu) + NADPH + H(+). It participates in porphyrin-containing compound metabolism; protoporphyrin-IX biosynthesis; 5-aminolevulinate from L-glutamyl-tRNA(Glu): step 1/2. In terms of biological role, catalyzes the NADPH-dependent reduction of glutamyl-tRNA(Glu) to glutamate 1-semialdehyde (GSA). The sequence is that of Glutamyl-tRNA reductase from Chromobacterium violaceum (strain ATCC 12472 / DSM 30191 / JCM 1249 / CCUG 213 / NBRC 12614 / NCIMB 9131 / NCTC 9757 / MK).